We begin with the raw amino-acid sequence, 501 residues long: Zinc finger C3HC-type protein 1 (501 aa).

An N-acetylalanine modification is found at Ala2. Residues 21 to 73 (VVRSPEGTPQKVRELIDEGIVPEEGGTEPKDTAATFQSVDGSPQAEQSPLEST) are disordered. Ser24 bears the Phosphoserine mark. Residue Thr28 is modified to Phosphothreonine. The segment covering 54-72 (ATFQSVDGSPQAEQSPLES) has biased composition (polar residues). Phosphoserine occurs at positions 58, 62, and 68. The residue at position 84 (Thr84) is a Phosphothreonine. The C3HC-type zinc finger occupies 102–156 (CAKYGWVTVECDMLKCSSCQAFLCASLQPTFDFGRYKERCAELKKSLCSAHEKFC). The interval 302–421 (SPIPGVEGRP…TSPRSFFDPT (120 aa)) is disordered. Phosphoserine occurs at positions 320 and 328. Polar residues predominate over residues 326 to 338 (TRSQDATVSPGSE). The residue at position 332 (Thr332) is a Phosphothreonine. Phosphoserine occurs at positions 334, 337, 343, 353, 358, 369, and 380. 2 stretches are compositionally biased toward polar residues: residues 350 to 359 (RTRSWESSSP) and 369 to 383 (SPTT…SMGT). At Thr383 the chain carries Phosphothreonine. Ser394 is subject to Phosphoserine. A Nuclear localization signal motif is present at residues 395–401 (PLRRTKR). 2 positions are modified to phosphoserine: Ser406 and Ser482. Residues 406-420 (SSSSSDTSPRSFFDP) show a composition bias toward low complexity.

As to quaternary structure, interacts with TPR; this interaction mediates ZC3HC1 nuclear envelopes (NE)-association but also required for proper positioning of a substantial amount of TPR at the nuclear basket (NB). Phosphorylated. May also be weakly phosphorylated on Tyr residues.

It localises to the nucleus. The protein resides in the nucleus envelope. Required for proper positioning of a substantial amount of TPR at the nuclear basket (NB) through interaction with TPR. This chain is Zinc finger C3HC-type protein 1 (Zc3hc1), found in Mus musculus (Mouse).